We begin with the raw amino-acid sequence, 954 residues long: MKYNPNEIEAKWQKYWAENQTFAAKNNSEKPKHYVLDMFPYPSGAGLHVGHPLGYIASDVYSRFKRHQGFNVLHPMGYDSFGLPAEQYAIQTGQRPEDTTRVNIDGGVDKEGKQIAGYRKQLDKIGFSFDWAREVRTSNPDYYKHTQWIFIQLFNSWYCRKQGKAFDISELVTVFEESGNALVEAVCDDNVTIFTADEWKSYSDDQKEKILLQYRMTYLAETEVNWCPGLGTVLANDEIVNGVSERGGFPVIRKKMTQWSMRISAYAERLLQGLNDIDWSESIKESQRNWIGKSVGALVTFNVKNHDEVIEVFTTRPDTIFGVTFMTLAPEHDLVAKITTPEQKEAVEAYIEKTAKRSERERMADVKTISGVFTGAYAEHPFTKEAIPVWIGDYVLAGYGTGAVMAVPCGDERDYAFANFFKGQNGMQEIKNIFANVDISEAAYGSKDNVEIAASDFLNGLNYKDATAKAIYKLEEIGQGKGKTNYRLRDAVFSRQRYWGEPFPVYYVNGLPKMIDTQHLPIILPEVEKYLPTEDGLPPLGNAAVWAWDIKENKVVNTDLVDNVSIFPLELNTMPGWAGSSWYWMRYMDAHNENEFASKEALAYWENVDLYIGGSEHATGHLLYSRFWNKFLKDKGFAPTEEPFKKLINQGMILGTTAYVYRLEGTNTFVSKNKIKGQNVQPIRVDVHFVNSSDELNIEKFKAWREDFNTAEFIFDENGKYIVGREVEKMSKSYYNVVTPDDICAEYGADTLRLYEMFLGPLEQAKPWNTAGISGVFGFLKKLWRLYFDDNGLIVNNDEPTKDNLKSLHKTIKKVAEDIENFSFNTSVSQFMICVNELSSQNCHSRAILEPLAILVSPYAPHIAEELWAQLGHKTSISEVAFPVFDAKHLVETNKEYPVSFNGKMRFTIELPLDLTAAQIEEIVMKDERTQKQLDGRIPNKVIIVPGKIINLVG.

The short motif at 40 to 51 is the 'HIGH' region element; that stretch reads PYPSGAGLHVGH. The short motif at 729–733 is the 'KMSKS' region element; the sequence is KMSKS. Lys732 lines the ATP pocket.

The protein belongs to the class-I aminoacyl-tRNA synthetase family.

The protein resides in the cytoplasm. The catalysed reaction is tRNA(Leu) + L-leucine + ATP = L-leucyl-tRNA(Leu) + AMP + diphosphate. The chain is Leucine--tRNA ligase from Flavobacterium johnsoniae (strain ATCC 17061 / DSM 2064 / JCM 8514 / BCRC 14874 / CCUG 350202 / NBRC 14942 / NCIMB 11054 / UW101) (Cytophaga johnsonae).